The sequence spans 101 residues: Apolipoprotein C-II (101 aa).

An N-terminal signal peptide occupies residues 1–22 (MGTRFLLALFLVLLVLGLEVQA). The interval 66-74 (AVDERIRDM) is lipid binding. Positions 78-101 (STAAVTTYAGIFTDQLFSMLKGEQ) are lipoprotein lipase cofactor.

It belongs to the apolipoprotein C2 family. Post-translationally, proapolipoprotein C-II is synthesized as a sialic acid containing glycoprotein which is subsequently desialylated prior to its proteolytic processing. Proapolipoprotein C-II, the major form found in plasma undergoes proteolytic cleavage of its N-terminal hexapeptide to generate apolipoprotein C-II, which occurs as the minor form in plasma.

The protein resides in the secreted. Component of chylomicrons, very low-density lipoproteins (VLDL), low-density lipoproteins (LDL), and high-density lipoproteins (HDL) in plasma. Plays an important role in lipoprotein metabolism as an activator of lipoprotein lipase. Both proapolipoprotein C-II and apolipoprotein C-II can activate lipoprotein lipase. The sequence is that of Apolipoprotein C-II (APOC2) from Tupaia glis (Common tree shrew).